The chain runs to 95 residues: DNA-directed RNA polymerase subunit Rpo11 (95 aa).

Belongs to the archaeal Rpo11/eukaryotic RPB11/RPC19 RNA polymerase subunit family. Part of the RNA polymerase complex.

Its subcellular location is the cytoplasm. It catalyses the reaction RNA(n) + a ribonucleoside 5'-triphosphate = RNA(n+1) + diphosphate. In terms of biological role, DNA-dependent RNA polymerase (RNAP) catalyzes the transcription of DNA into RNA using the four ribonucleoside triphosphates as substrates. The protein is DNA-directed RNA polymerase subunit Rpo11 of Pyrococcus horikoshii (strain ATCC 700860 / DSM 12428 / JCM 9974 / NBRC 100139 / OT-3).